We begin with the raw amino-acid sequence, 779 residues long: Lon protease (779 aa).

One can recognise a Lon N-terminal domain in the interval 7–190; that stretch reads VPVLFLNDSI…LLIGWTGDHL (184 aa). 352-359 lines the ATP pocket; the sequence is GPPGVGKT. Residues 589 to 769 form the Lon proteolytic domain; the sequence is TAVPGVATGL…ADIIAAALEP (181 aa). Residues S675 and K718 contribute to the active site.

This sequence belongs to the peptidase S16 family. In terms of assembly, homohexamer. Organized in a ring with a central cavity. Oligomerization is Mg(2+)-dependent.

It localises to the cytoplasm. The enzyme catalyses Hydrolysis of proteins in presence of ATP.. Its activity is regulated as follows. Stimulated by unfolded protein. ATP-dependent serine protease that mediates the selective degradation of mutant and abnormal proteins as well as certain short-lived regulatory proteins. Required for cellular homeostasis and for survival from DNA damage and developmental changes induced by stress. Degrades polypeptides processively to yield small peptide fragments that are 5 to 10 amino acids long. Binds to DNA in a double-stranded, site-specific manner. This is Lon protease from Mycolicibacterium smegmatis (Mycobacterium smegmatis).